The chain runs to 1047 residues: Error-prone DNA polymerase (1047 aa).

Belongs to the DNA polymerase type-C family. DnaE2 subfamily.

The protein localises to the cytoplasm. The enzyme catalyses DNA(n) + a 2'-deoxyribonucleoside 5'-triphosphate = DNA(n+1) + diphosphate. DNA polymerase involved in damage-induced mutagenesis and translesion synthesis (TLS). It is not the major replicative DNA polymerase. The chain is Error-prone DNA polymerase from Methylococcus capsulatus (strain ATCC 33009 / NCIMB 11132 / Bath).